Reading from the N-terminus, the 515-residue chain is ATP synthase subunit alpha (515 aa).

An ATP-binding site is contributed by 169–176 (GDRQTGKT).

The protein belongs to the ATPase alpha/beta chains family. As to quaternary structure, F-type ATPases have 2 components, CF(1) - the catalytic core - and CF(0) - the membrane proton channel. CF(1) has five subunits: alpha(3), beta(3), gamma(1), delta(1), epsilon(1). CF(0) has three main subunits: a(1), b(2) and c(9-12). The alpha and beta chains form an alternating ring which encloses part of the gamma chain. CF(1) is attached to CF(0) by a central stalk formed by the gamma and epsilon chains, while a peripheral stalk is formed by the delta and b chains.

The protein resides in the cell inner membrane. It catalyses the reaction ATP + H2O + 4 H(+)(in) = ADP + phosphate + 5 H(+)(out). In terms of biological role, produces ATP from ADP in the presence of a proton gradient across the membrane. The alpha chain is a regulatory subunit. The sequence is that of ATP synthase subunit alpha from Myxococcus xanthus.